The following is a 261-amino-acid chain: Segregation and condensation protein A (261 aa).

Belongs to the ScpA family. As to quaternary structure, component of a cohesin-like complex composed of ScpA, ScpB and the Smc homodimer, in which ScpA and ScpB bind to the head domain of Smc. The presence of the three proteins is required for the association of the complex with DNA.

The protein resides in the cytoplasm. Its function is as follows. Participates in chromosomal partition during cell division. May act via the formation of a condensin-like complex containing Smc and ScpB that pull DNA away from mid-cell into both cell halves. The chain is Segregation and condensation protein A from Ligilactobacillus salivarius (strain UCC118) (Lactobacillus salivarius).